Here is a 152-residue protein sequence, read N- to C-terminus: Transcriptional regulator MraZ (152 aa).

2 consecutive SpoVT-AbrB domains span residues 5-52 (ATLV…PLPE) and 81-124 (ASEC…DETT).

The protein belongs to the MraZ family. As to quaternary structure, forms oligomers.

The protein localises to the cytoplasm. The protein resides in the nucleoid. Its function is as follows. Negatively regulates its own expression and that of the subsequent genes in the proximal part of the division and cell wall (dcw) gene cluster. Acts by binding directly to DNA. May also regulate the expression of genes outside the dcw cluster. The protein is Transcriptional regulator MraZ of Escherichia coli O45:K1 (strain S88 / ExPEC).